The following is a 562-amino-acid chain: Dihydroxy-acid dehydratase (562 aa).

Asp80 serves as a coordination point for Mg(2+). Cys121 contacts [2Fe-2S] cluster. Asp122 and Lys123 together coordinate Mg(2+). Position 123 is an N6-carboxylysine (Lys123). Cys194 provides a ligand contact to [2Fe-2S] cluster. Mg(2+) is bound at residue Glu446. The Proton acceptor role is filled by Ser472.

The protein belongs to the IlvD/Edd family. In terms of assembly, homodimer. It depends on [2Fe-2S] cluster as a cofactor. The cofactor is Mg(2+).

It catalyses the reaction (2R)-2,3-dihydroxy-3-methylbutanoate = 3-methyl-2-oxobutanoate + H2O. It carries out the reaction (2R,3R)-2,3-dihydroxy-3-methylpentanoate = (S)-3-methyl-2-oxopentanoate + H2O. Its pathway is amino-acid biosynthesis; L-isoleucine biosynthesis; L-isoleucine from 2-oxobutanoate: step 3/4. It functions in the pathway amino-acid biosynthesis; L-valine biosynthesis; L-valine from pyruvate: step 3/4. In terms of biological role, functions in the biosynthesis of branched-chain amino acids. Catalyzes the dehydration of (2R,3R)-2,3-dihydroxy-3-methylpentanoate (2,3-dihydroxy-3-methylvalerate) into 2-oxo-3-methylpentanoate (2-oxo-3-methylvalerate) and of (2R)-2,3-dihydroxy-3-methylbutanoate (2,3-dihydroxyisovalerate) into 2-oxo-3-methylbutanoate (2-oxoisovalerate), the penultimate precursor to L-isoleucine and L-valine, respectively. This Staphylococcus aureus (strain USA300 / TCH1516) protein is Dihydroxy-acid dehydratase.